The sequence spans 240 residues: Proteasome subunit alpha (240 aa).

The protein belongs to the peptidase T1A family. As to quaternary structure, the 20S proteasome core is composed of 14 alpha and 14 beta subunits that assemble into four stacked heptameric rings, resulting in a barrel-shaped structure. The two inner rings, each composed of seven catalytic beta subunits, are sandwiched by two outer rings, each composed of seven alpha subunits. The catalytic chamber with the active sites is on the inside of the barrel. Has a gated structure, the ends of the cylinder being occluded by the N-termini of the alpha-subunits. Is capped at one or both ends by the proteasome regulatory ATPase, PAN.

The protein resides in the cytoplasm. Its activity is regulated as follows. The formation of the proteasomal ATPase PAN-20S proteasome complex, via the docking of the C-termini of PAN into the intersubunit pockets in the alpha-rings, triggers opening of the gate for substrate entry. Interconversion between the open-gate and close-gate conformations leads to a dynamic regulation of the 20S proteasome proteolysis activity. Component of the proteasome core, a large protease complex with broad specificity involved in protein degradation. In Methanoculleus marisnigri (strain ATCC 35101 / DSM 1498 / JR1), this protein is Proteasome subunit alpha.